The sequence spans 519 residues: Acetylcholine receptor subunit gamma (519 aa).

Positions 1–22 (MCGGQRPLFLLPLLAVCLGAKG) are cleaved as a signal peptide. At 23–240 (RNQEERLLGD…VVFYLLIQRK (218 aa)) the chain is on the extracellular side. Asn52 and Asn163 each carry an N-linked (GlcNAc...) asparagine glycan. An intrachain disulfide couples Cys150 to Cys164. Helical transmembrane passes span 241–265 (PLFY…IYFL), 274–292 (CTVA…FLVA), and 308–329 (YLTF…VLNV). The Cytoplasmic portion of the chain corresponds to 330–476 (SLRSPHTHSM…WFLVGRVLDR (147 aa)). Residues 477–497 (VCFLAMLSLFVCGTAGIFLMA) traverse the membrane as a helical segment.

It belongs to the ligand-gated ion channel (TC 1.A.9) family. Acetylcholine receptor (TC 1.A.9.1) subfamily. Gamma/CHRNG sub-subfamily. In terms of assembly, pentamer of two alpha chains, and one each of the beta, delta, and gamma (in immature muscle) or epsilon (in mature muscle) chains.

The protein resides in the postsynaptic cell membrane. It is found in the cell membrane. The catalysed reaction is K(+)(in) = K(+)(out). The enzyme catalyses Na(+)(in) = Na(+)(out). In terms of biological role, after binding acetylcholine, the AChR responds by an extensive change in conformation that affects all subunits and leads to opening of an ion-conducting channel across the plasma membrane. The sequence is that of Acetylcholine receptor subunit gamma (CHRNG) from Bos taurus (Bovine).